Consider the following 200-residue polypeptide: Inducible T-cell costimulator (200 aa).

A signal peptide spans Met-1 to Gly-20. Topologically, residues Glu-21–Leu-144 are extracellular. Residue Asn-23 is glycosylated (N-linked (GlcNAc...) asparagine). An Ig-like V-type domain is found at Met-30–Glu-133. 2 disulfides stabilise this stretch: Cys-42–Cys-109 and Cys-63–Cys-83. N-linked (GlcNAc...) asparagine glycans are attached at residues Asn-89 and Asn-123. Residues Pro-145 to Phe-165 traverse the membrane as a helical segment. At Ser-166 to Ser-200 the chain is on the cytoplasmic side.

Homodimer; disulfide-linked. Interacts with ICOSLG. Interacts with PIK3R1. Interacts with TBK1; this interaction is critical for the maturation of T follicular regulatory cells. Post-translationally, N-glycosylated. Expressed on activated T-cells and resting memory T-cells. High expression seen in the thymic medulla and in the germinal centers and T-cell zones of lymph nodes and Peyer patches. Expressed at low levels in the spleen.

It is found in the cell membrane. Functionally, stimulatory receptor expressed in activated or antigen-experienced T-cells that plays an important role in the immune response. Upon binding to its ligand ICOSL expressed on antigen presenting cells (APCs), delivers costimulatory signals that enhances all basic T-cell responses to a foreign antigen, namely proliferation, secretion of lymphokines including IL10, up-regulation of molecules that mediate cell-cell interaction, and effective help for antibody secretion by B-cells. Also acts as a costimulatory receptor critical for the differentiation of T follicular regulatory cells upon immune challenges such as viral infection. Mechanistically, potentiates TCR-induced calcium flux by augmenting PLCG1 activation and actin remodeling. In addition, activates PI3K signaling pathways independently of calcium flux. Essential both for efficient interaction between T and B-cells and for normal antibody responses to T-cell dependent antigens. Prevents the apoptosis of pre-activated T-cells. Plays a critical role in CD40-mediated class switching of immunoglobin isotypes. In Mus musculus (Mouse), this protein is Inducible T-cell costimulator (Icos).